The chain runs to 113 residues: Ig kappa chain V-II region 17S29.1 (113 aa).

Residues Asp1 to Cys23 are framework-1. A disulfide bridge links Cys23 with Cys93. Residues Arg24–Tyr39 form a complementarity-determining-1 region. Positions Trp40–Tyr54 are framework-2. The tract at residues Gln55–Ser61 is complementarity-determining-2. The framework-3 stretch occupies residues Gly62–Cys93. Residues Ala94–Thr102 form a complementarity-determining-3 region. The segment at Phe103–Lys112 is framework-4.

In terms of biological role, anti-streptococcal group A carbohydrate antibody. The polypeptide is Ig kappa chain V-II region 17S29.1 (Mus musculus (Mouse)).